Here is a 303-residue protein sequence, read N- to C-terminus: Acetylglutamate kinase (303 aa).

Substrate-binding positions include 76-77 (GG), Arg-98, and Asn-199.

It belongs to the acetylglutamate kinase family. ArgB subfamily.

Its subcellular location is the cytoplasm. The catalysed reaction is N-acetyl-L-glutamate + ATP = N-acetyl-L-glutamyl 5-phosphate + ADP. The protein operates within amino-acid biosynthesis; L-arginine biosynthesis; N(2)-acetyl-L-ornithine from L-glutamate: step 2/4. Functionally, catalyzes the ATP-dependent phosphorylation of N-acetyl-L-glutamate. In Clavibacter michiganensis subsp. michiganensis (strain NCPPB 382), this protein is Acetylglutamate kinase.